A 353-amino-acid chain; its full sequence is Probable G-protein coupled receptor 139 (353 aa).

Residues 1–29 (MEHTHAHLAANSSLSWWSPGSACGLGFVP) are Extracellular-facing. The N-linked (GlcNAc...) asparagine glycan is linked to asparagine 11. A helical transmembrane segment spans residues 30–50 (VVYYSLLLCLGLPANILTVII). The Cytoplasmic portion of the chain corresponds to 51 to 65 (LSQLVARRQKSSYNY). The chain crosses the membrane as a helical span at residues 66 to 86 (LLALAAADILVLFFIVFVDFL). The Extracellular portion of the chain corresponds to 87–102 (LEDFILNMQMPQVPDK). A helical membrane pass occupies residues 103-123 (IIEVLEFSSIHTSIWITVPLT). Residues 124–148 (IDRYIAVCHPLKYHTVSYPARTRKV) lie on the Cytoplasmic side of the membrane. The chain crosses the membrane as a helical span at residues 149-169 (IVSVYITCFLTSIPYYWWPNI). Topologically, residues 170–181 (WTEDYISTSVHH) are extracellular. The helical transmembrane segment at 182–202 (VLIWIHCFTVYLVPCSIFFIL) threads the bilayer. Residues 203–228 (NSIIVYKLRRKSNFRLRGYSTGKTTA) are Cytoplasmic-facing. A helical transmembrane segment spans residues 229–249 (ILFTITSIFATLWAPRIIMIL). Over 250–268 (YHLYGAPIQNRWLVHIMSD) the chain is Extracellular. The helical transmembrane segment at 269–289 (IANMLALLNTAINFFLYCFIS) threads the bilayer. At 290–353 (KRFRTMAAAT…KNGKPIKVSP (64 aa)) the chain is on the cytoplasmic side.

It belongs to the G-protein coupled receptor 1 family. Expressed almost exclusively in the brain. Detected at very low levels in the peripheral tissues.

It is found in the cell membrane. Orphan receptor. Seems to act through a G(q/11)-mediated pathway. This Homo sapiens (Human) protein is Probable G-protein coupled receptor 139 (GPR139).